A 332-amino-acid chain; its full sequence is Glycerol-3-phosphate dehydrogenase [NAD(P)+] (332 aa).

The NADPH site is built by Trp-11, Arg-30, and Lys-108. 3 residues coordinate sn-glycerol 3-phosphate: Lys-108, Gly-137, and Ser-139. Residue Ala-141 participates in NADPH binding. Sn-glycerol 3-phosphate is bound by residues Lys-192, Asp-245, Ser-255, Arg-256, and Asn-257. Lys-192 acts as the Proton acceptor in catalysis. Arg-256 is a binding site for NADPH. 2 residues coordinate NADPH: Val-280 and Glu-282.

Belongs to the NAD-dependent glycerol-3-phosphate dehydrogenase family.

Its subcellular location is the cytoplasm. The enzyme catalyses sn-glycerol 3-phosphate + NAD(+) = dihydroxyacetone phosphate + NADH + H(+). The catalysed reaction is sn-glycerol 3-phosphate + NADP(+) = dihydroxyacetone phosphate + NADPH + H(+). It participates in membrane lipid metabolism; glycerophospholipid metabolism. Its function is as follows. Catalyzes the reduction of the glycolytic intermediate dihydroxyacetone phosphate (DHAP) to sn-glycerol 3-phosphate (G3P), the key precursor for phospholipid synthesis. This Burkholderia orbicola (strain AU 1054) protein is Glycerol-3-phosphate dehydrogenase [NAD(P)+].